A 106-amino-acid chain; its full sequence is UPF0473 protein LCABL_08490 (106 aa).

The protein belongs to the UPF0473 family.

The sequence is that of UPF0473 protein LCABL_08490 from Lacticaseibacillus casei (strain BL23) (Lactobacillus casei).